Consider the following 196-residue polypeptide: MPFVVVITGIPGVGKSTITKLALKKTRAKFRLVNFGDLMFEEAVNMGLVKHRDEMRKLDPLTQKELQLKVAQRIVEIARKEPVLLDTHATIRTPAGYLLGFPREVIEILNPNFIVIIEAAPSEILGRRLRDLKRDRDVETEEQIARHQDLNRAAAIAYAMHSNALIKIIENHEDKGLEEAVNELVKVLDLAVSEYA.

9-17 is an ATP binding site; that stretch reads GIPGVGKST.

Belongs to the archaeal adenylate kinase family.

It is found in the cytoplasm. The enzyme catalyses AMP + ATP = 2 ADP. This is Adenylate kinase from Thermococcus kodakarensis (strain ATCC BAA-918 / JCM 12380 / KOD1) (Pyrococcus kodakaraensis (strain KOD1)).